Here is a 175-residue protein sequence, read N- to C-terminus: Large ribosomal subunit protein uL10 (175 aa).

Belongs to the universal ribosomal protein uL10 family. Part of the ribosomal stalk of the 50S ribosomal subunit. The N-terminus interacts with L11 and the large rRNA to form the base of the stalk. The C-terminus forms an elongated spine to which L12 dimers bind in a sequential fashion forming a multimeric L10(L12)X complex.

In terms of biological role, forms part of the ribosomal stalk, playing a central role in the interaction of the ribosome with GTP-bound translation factors. The polypeptide is Large ribosomal subunit protein uL10 (Cupriavidus taiwanensis (strain DSM 17343 / BCRC 17206 / CCUG 44338 / CIP 107171 / LMG 19424 / R1) (Ralstonia taiwanensis (strain LMG 19424))).